Consider the following 129-residue polypeptide: Large-conductance mechanosensitive channel (129 aa).

2 helical membrane passes run 10-30 and 76-96; these read FAVK…GAFG and GAFI…FGMV.

It belongs to the MscL family. Homopentamer.

Its subcellular location is the cell inner membrane. Functionally, channel that opens in response to stretch forces in the membrane lipid bilayer. May participate in the regulation of osmotic pressure changes within the cell. The protein is Large-conductance mechanosensitive channel of Actinobacillus pleuropneumoniae serotype 5b (strain L20).